Reading from the N-terminus, the 160-residue chain is Nutritionally-regulated adipose and cardiac enriched protein homolog (160 aa).

Residues 1-69 (MRTAAGAVSP…AKPQRTSRRV (69 aa)) are disordered. 2 stretches are compositionally biased toward basic and acidic residues: residues 12–25 (SRPE…KNEE) and 33–42 (CRAEREDNRK). Residues 101-121 (GGSLLLQLCVCVLLVLALGLY) traverse the membrane as a helical segment.

It localises to the cell membrane. The polypeptide is Nutritionally-regulated adipose and cardiac enriched protein homolog (NRAC) (Homo sapiens (Human)).